The primary structure comprises 213 residues: Peptidyl-tRNA hydrolase (213 aa).

Tyr-26 provides a ligand contact to tRNA. Catalysis depends on His-31, which acts as the Proton acceptor. Residues Tyr-78, Asn-80, and Asn-126 each coordinate tRNA.

This sequence belongs to the PTH family. In terms of assembly, monomer.

The protein resides in the cytoplasm. The enzyme catalyses an N-acyl-L-alpha-aminoacyl-tRNA + H2O = an N-acyl-L-amino acid + a tRNA + H(+). In terms of biological role, hydrolyzes ribosome-free peptidyl-tRNAs (with 1 or more amino acids incorporated), which drop off the ribosome during protein synthesis, or as a result of ribosome stalling. Its function is as follows. Catalyzes the release of premature peptidyl moieties from peptidyl-tRNA molecules trapped in stalled 50S ribosomal subunits, and thus maintains levels of free tRNAs and 50S ribosomes. The polypeptide is Peptidyl-tRNA hydrolase (Nostoc punctiforme (strain ATCC 29133 / PCC 73102)).